Consider the following 299-residue polypeptide: ATP phosphoribosyltransferase (299 aa).

It belongs to the ATP phosphoribosyltransferase family. Long subfamily. Requires Mg(2+) as cofactor.

Its subcellular location is the cytoplasm. The catalysed reaction is 1-(5-phospho-beta-D-ribosyl)-ATP + diphosphate = 5-phospho-alpha-D-ribose 1-diphosphate + ATP. It participates in amino-acid biosynthesis; L-histidine biosynthesis; L-histidine from 5-phospho-alpha-D-ribose 1-diphosphate: step 1/9. Its activity is regulated as follows. Feedback inhibited by histidine. In terms of biological role, catalyzes the condensation of ATP and 5-phosphoribose 1-diphosphate to form N'-(5'-phosphoribosyl)-ATP (PR-ATP). Has a crucial role in the pathway because the rate of histidine biosynthesis seems to be controlled primarily by regulation of HisG enzymatic activity. This Baumannia cicadellinicola subsp. Homalodisca coagulata protein is ATP phosphoribosyltransferase.